Consider the following 178-residue polypeptide: MTEAQEPEYGGPSVPQTRTARHRRIVDILNRQPVRSQSQLAKLLADDGLSVTQATLSRDLDELGAVKIRNTGGELIYAVPSEGGFRTPQAPLGGSAKEERMRRLSAELLISAEASANLVVLRTPPGAAQFLASAIDQAELHDILGTIAGDDTLMLISRDPSGGQALADHLLRLAQNDR.

The segment at 1–20 (MTEAQEPEYGGPSVPQTRTA) is disordered.

Belongs to the ArgR family.

The protein resides in the cytoplasm. Its pathway is amino-acid biosynthesis; L-arginine biosynthesis [regulation]. Its function is as follows. Regulates arginine biosynthesis genes. This is Arginine repressor from Streptomyces griseus subsp. griseus (strain JCM 4626 / CBS 651.72 / NBRC 13350 / KCC S-0626 / ISP 5235).